A 152-amino-acid polypeptide reads, in one-letter code: UPF0260 protein BR1477/BS1330_I1471 (152 aa).

It belongs to the UPF0260 family.

The chain is UPF0260 protein BR1477/BS1330_I1471 from Brucella suis biovar 1 (strain 1330).